The following is a 348-amino-acid chain: D-alanine--D-alanine ligase (348 aa).

The ATP-grasp domain occupies 132 to 334 (KRVLESIGIP…YPDLIEELVT (203 aa)). An ATP-binding site is contributed by 162-217 (LARLTFPIFVKPANMGSSVGISKAQTKVELRKAIQLALTYDSRVLIEQGVVAREIE). Positions 288, 301, and 303 each coordinate Mg(2+).

The protein belongs to the D-alanine--D-alanine ligase family. Mg(2+) serves as cofactor. Requires Mn(2+) as cofactor.

It localises to the cytoplasm. The enzyme catalyses 2 D-alanine + ATP = D-alanyl-D-alanine + ADP + phosphate + H(+). It participates in cell wall biogenesis; peptidoglycan biosynthesis. In terms of biological role, cell wall formation. The chain is D-alanine--D-alanine ligase from Streptococcus pyogenes serotype M3 (strain SSI-1).